The chain runs to 511 residues: Pancreatic alpha-amylase (511 aa).

A signal peptide spans 1 to 15 (MKFFLLLFTIGFCWA). Q16 is subject to Pyrrolidone carboxylic acid. 3 disulfides stabilise this stretch: C43–C101, C85–C130, and C156–C175. Ca(2+)-binding residues include N115, R173, and D182. R210 contributes to the chloride binding site. The active-site Nucleophile is the D212. H216 is a binding site for Ca(2+). E248 serves as the catalytic Proton donor. The chloride site is built by N313 and R352. 2 disulfide bridges follow: C393-C399 and C465-C477. N476 carries N-linked (GlcNAc...) asparagine glycosylation.

Belongs to the glycosyl hydrolase 13 family. In terms of assembly, monomer. Binds to the sea anemone inhibitor helianthamide. Ca(2+) serves as cofactor. Requires chloride as cofactor. In terms of tissue distribution, detected in pancreas (at protein level).

The protein localises to the secreted. The protein resides in the extracellular space. The enzyme catalyses Endohydrolysis of (1-&gt;4)-alpha-D-glucosidic linkages in polysaccharides containing three or more (1-&gt;4)-alpha-linked D-glucose units.. This chain is Pancreatic alpha-amylase (AMY2A), found in Homo sapiens (Human).